The chain runs to 188 residues: Interferon alpha-2 (188 aa).

An N-terminal signal peptide occupies residues 1–23 (MALTFALLVALLVLSCKSSCSVG). Cystine bridges form between Cys24–Cys121 and Cys52–Cys161. A glycan (O-linked (GalNAc...) threonine) is linked at Thr129.

Belongs to the alpha/beta interferon family. As to quaternary structure, interacts with IFNAR2.

The protein localises to the secreted. Its function is as follows. Produced by macrophages, IFN-alpha have antiviral activities. In Homo sapiens (Human), this protein is Interferon alpha-2 (IFNA2).